A 250-amino-acid chain; its full sequence is Protein BTG4 (250 aa).

The protein belongs to the BTG family. Interacts with CNOT7 and EIF4E. Interacts with CNOT8. Expressed in oocytes. Expressed in testis and in olfactory epithelium.

Adapter protein that bridges CNOT7, a catalytic subunit of the CCR4-NOT complex, to EIF4E, and facilitates maternal mRNAs decay during the maturation of oocytes and in the fertilized egg. It is therefore required for the maternal-zygotic transition (MZT), zygotic cleavage and initiation of embryonic development. The sequence is that of Protein BTG4 (Btg4) from Mus musculus (Mouse).